Consider the following 253-residue polypeptide: Large ribosomal subunit protein uL4 (253 aa).

It belongs to the universal ribosomal protein uL4 family. Part of the 50S ribosomal subunit.

Its function is as follows. One of the primary rRNA binding proteins, this protein initially binds near the 5'-end of the 23S rRNA. It is important during the early stages of 50S assembly. It makes multiple contacts with different domains of the 23S rRNA in the assembled 50S subunit and ribosome. Forms part of the polypeptide exit tunnel. This Methanococcoides burtonii (strain DSM 6242 / NBRC 107633 / OCM 468 / ACE-M) protein is Large ribosomal subunit protein uL4.